The following is a 560-amino-acid chain: uncharacterized protein (560 aa).

At 1–17 (MEPKRKSGSLAKHDLPQ) the chain is on the cytoplasmic side. A helical membrane pass occupies residues 18–38 (FYLLIMLYLAQGIPVGLAFGT). Residues 39 to 54 (VPFLLKSLAKETSFTS) lie on the Extracellular side of the membrane. Residues 55-75 (LGIFSMATYPYSLKIIWSPIV) form a helical membrane-spanning segment. The Cytoplasmic portion of the chain corresponds to 76-88 (DSLYNKRIGRRRS). The helical transmembrane segment at 89-109 (WIIPVQFVSGFVLWALGWCIS) threads the bilayer. At 110–139 (QGIIFDGVDDAFHNRGNGTLHSVSIKNLTW) the chain is on the extracellular side. The chain crosses the membrane as a helical span at residues 140–160 (WFGLLVFLCATQDIAVDGWAL). Residues 161-172 (TILSKESLSYAS) lie on the Cytoplasmic side of the membrane. Residues 173-193 (TAQTIGLNIGYFMSFTIFLSL) traverse the membrane as a helical segment. Residues 194–214 (NSSDFANKYFRNIPLDHGFIS) are Extracellular-facing. Residues 215-235 (LGGYMKFSGMLYIVITIYIIF) traverse the membrane as a helical segment. The Cytoplasmic portion of the chain corresponds to 236 to 329 (CTKEKPYVEY…KLLEQGFKRE (94 aa)). Residues 330-350 (DLAVTVLIDLPFEIIFGYYVV) form a helical membrane-spanning segment. The Extracellular segment spans residues 351 to 374 (KWSSDKDPMIRDNRRLRNSTGTNK). A helical transmembrane segment spans residues 375–395 (VIKFLVGDAGVLTPWLWGFLG). Residues 396 to 421 (RLAAAVLGSYVVKQFPKDGEISTGYF) are Cytoplasmic-facing. The chain crosses the membrane as a helical span at residues 422–442 (CLVIFQHLLGSFMNTVQFIGI). Topologically, residues 443–521 (SAFHTRVADP…LNGTVTILRD (79 aa)) are extracellular. A helical membrane pass occupies residues 522–542 (GYYITNLICIVVGLFLYFGYL). Topologically, residues 543 to 560 (KRKILHLQSLPISSWRCT) are cytoplasmic.

The protein localises to the membrane. This is an uncharacterized protein from Saccharomyces cerevisiae (strain ATCC 204508 / S288c) (Baker's yeast).